Here is a 3718-residue protein sequence, read N- to C-terminus: MAKRGGQLCAGSAPGALGPRSPAPRPLLLLLAGLALVGEARTPGGDGFSLHPPYFNLAEGARITASATCGEEAPTRSVSRPTEDLYCKLVGGPVAGGDPNQTIQGQYCDICTAANSNKAHPVSNAIDGTERWWQSPPLSRGLEYNEVNVTLDLGQVFHVAYVLIKFANSPRPDLWVLERSTDFGHTYQPWQFFASSKRDCLERFGPRTLERITQDDDVICTTEYSRIVPLENGEIVVSLVNGRPGALNFSYSPLLRDFTKATNIRLRFLRTNTLLGHLMGKALRDPTVTRRYYYSIKDISIGGRCVCHGHADVCDAKDPLDPFRLQCACQHNTCGGSCDRCCPGFNQQPWKPATTDSANECQSCNCHGHAYDCYYDPEVDRRNASQNQDNVYQGGGVCLDCQHHTTGINCERCLPGFFRAPDQPLDSPHVCRPCDCESDFTDGTCEDLTGRCYCRPNFTGELCAACAEGYTDFPHCYPLPSFPHNDTREQVLPAGQIVNCDCNAAGTQGNACRKDPRLGRCVCKPNFRGAHCELCAPGFHGPSCHPCQCSSPGVANSLCDPESGQCMCRTGFEGDRCDHCALGYFHFPLCQLCGCSPAGTLPEGCDEAGRCQCRPGFDGPHCDRCLPGYHGYPDCHACACDPRGALDQQCGVGGLCHCRPGYTGATCQECSPGFYGFPSCIPCHCSADGSLHTTCDPTTGQCRCRPRVTGLHCDMCVPGAYNFPYCEAGSCHPAGLAPANPALPETQAPCMCRAHVEGPSCDRCKPGYWGLSASNPEGCTRCSCDPRGTLGGVTECQGNGQCFCKAHVCGKTCAACKDGFFGLDYADYFGCRSCRCDVGGALGQGCEPKTGACRCRPNTQGPTCSEPAKDHYLPDLHHMRLELEEAATPEGHAVRFGFNPLEFENFSWRGYAHMMAIQPRIVARLNVTSPDLFRLVFRYVNRGSTSVNGQISVREEGKLSSCTNCTEQSQPVAFPPSTEPAFVTVPQRGFGEPFVLNPGIWALLVEAEGVLLDYVVLLPSTYYEAALLQHRVTEACTYRPSALHSTENCLVYAHLPLDGFPSAAGTEALCRHDNSLPRPCPTEQLSPSHPPLATCFGSDVDIQLEMAVPQPGQYVLVVEYVGEDSHQEMGVAVHTPQRAPQQGVLNLHPCPYSSLCRSPARDTQHHLAIFYLDSEASIRLTAEQAHFFLHSVTLVPVEEFSTEFVEPRVFCVSSHGTFNPSSAACLASRFPKPPQPIILKDCQVLPLPPDLPLTQSQELSPGAPPEGPQPRPPTAVDPNAEPTLLRHPQGTVVFTTQVPTLGRYAFLLHGYQPVHPSFPVEVLINGGRIWQGHANASFCPHGYGCRTLVLCEGQTMLDVTDNELTVTVRVPEGRWLWLDYVLIVPEDAYSSSYLQEEPLDKSYDFISHCATQGYHISPSSSSPFCRNAATSLSLFYNNGALPCGCHEVGAVSPTCEPFGGQCPCRGHVIGRDCSRCATGYWGFPNCRPCDCGARLCDELTGQCICPPRTVPPDCLVCQPQSFGCHPLVGCEECNCSGPGVQELTDPTCDMDSGQCRCRPNVAGRRCDTCAPGFYGYPSCRPCDCHEAGTMASVCDPLTGQCHCKENVQGSRCDQCRVGTFSLDAANPKGCTRCFCFGATERCGNSNLARHEFVDMEGWVLLSSDRQVVPHEHRPEIELLHADLRSVADTFSELYWQAPPSYLGDRVSSYGGTLHYELHSETQRGDIFIPYESRPDVVLQGNQMSIAFLELAYPPPGQVHRGQLQLVEGNFRHLETHNPVSREELMMVLAGLEQLQIRALFSQTSSSVSLRRVVLEVASEAGRGPPASNVELCMCPANYRGDSCQECAPGYYRDTKGLFLGRCVPCQCHGHSDRCLPGSGICVGCQHNTEGDQCERCRPGFVSSDPSNPASPCVSCPCPLAVPSNNFADGCVLRNGRTQCLCRPGYAGASCERCAPGFFGNPLVLGSSCQPCDCSGNGDPNMIFSDCDPLTGACRGCLRHTTGPHCERCAPGFYGNALLPGNCTRCDCSPCGTETCDPQSGRCLCKAGVTGQRCDRCLEGYFGFEQCQGCRPCACGPAAKGSECHPQSGQCHCQPGTTGPQCLECAPGYWGLPEKGCRRCQCPRGHCDPHTGHCTCPPGLSGERCDTCSQQHQVPVPGKPGGHGIHCEVCDHCVVLLLDDLERAGALLPAIREQLQGINASSAAWARLHRLNASIADLQSKLRSPPGPRYQAAQQLQTLEQQSISLQQDTERLGSQATGVQGQAGQLLDTTESTLGRAQKLLESVRAVGRALNELASRMGQGSPGDALVPSGEQLRWALAEVERLLWDMRTRDLGAQGAVAEAELAEAQRLMARVQEQLTSFWEENQSLATHIRDQLAQYESGLMDLREALNQAVNTTREAEELNSRNQERLKEALQWKQELSQDNATLKATLQAASLILGHVSELLQGIDQAKEDLEHLAASLDGAWTPLLKRMQAFSPASSKVDLVEAAEAHAQKLNQLAINLSGIILGINQDRFIQRAVEASNAYSSILQAVQAAEDAAGQALRQASRTWEMVVQRGLAAGARQLLANSSALEETILGHQGRLGLAQGRLQAAGIQLHNVWARKNQLAAQIQEAQAMLAMDTSETSEKIAHAKAVAAEALSTATHVQSQLQGMQKNVERWQSQLGGLQGQDLSQVERDASSSVSTLEKTLPQLLAKLSRLENRGVHNASLALSANIGRVRKLIAQARSAASKVKVSMKFNGRSGVRLRTPRDLADLAAYTALKFHIQSPVPAPEPGKNTGDHFVLYMGSRQATGDYMGVSLRNQKVHWVYRLGKAGPTTLSIDENIGEQFAAVSIDRTLQFGHMSVTVEKQMVHEIKGDTVAPGSEGLLNLHPDDFVFYVGGYPSNFTPPEPLRFPGYLGCIEMETLNEEVVSLYNFEQTFMLDTAVDKPCARSKATGDPWLTDGSYLDGSGFARISFEKQFSNTKRFDQELRLVSYNGIIFFLKQESQFLCLAVQEGTLVLFYDFGSGLKKADPLQPPQALTAASKAIQVFLLAGNRKRVLVRVERATVFSVDQDNMLEMADAYYLGGVPPEQLPLSLRQLFPSGGSVRGCIKGIKALGKYVDLKRLNTTGISFGCTADLLVGRTMTFHGHGFLPLALPDVAPITEVVYSGFGFRGTQDNNLLYYRTSPDGPYQVSLREGHVTLRFMNQEVETQRVFADGAPHYVAFYSNVTGVWLYVDDQLQLVKSHERTTPMLQLQPEEPSRLLLGGLPVSGTFHNFSGCISNVFVQRLRGPQRVFDLHQNMGSVNVSVGCTPAQLIETSRATAQKVSRRSRQPSQDLACTTPWLPGTIQDAYQFGGPLPSYLQFVGISPSHRNRLHLSMLVRPHAASQGLLLSTAPMSGRSPSLVLFLNHGHFVAQTEGPGPRLQVQSRQHSRAGQWHRVSVRWGMQQIQLVVDGSQTWSQKALHHRVPRAERPQPYTLSVGGLPASSYSSKLPVSVGFSGCLKKLQLDKRPLRTPTQMVGVTPCVSGPLEDGLFFPGSEGVVTLELPKAKMPYVSLELEMRPLAAAGLIFHLGQALATPYMQLKVLTEQVLLQANDGAGEFSTWVTYPKLCDGRWHRVAVIMGRDTLRLEVDTQSNHTTGRLPESLAGSPALLHLGSLPKSSTARPELPAYRGCLRKLLINGAPVNVTASVQIQGAVGMRGCPSGTLALSKQGKALTQRQAKPSVSPLLWH.

Residues 1–40 form the signal peptide; it reads MAKRGGQLCAGSAPGALGPRSPAPRPLLLLLAGLALVGEA. The Laminin N-terminal domain maps to 46-304; the sequence is DGFSLHPPYF…SIKDISIGGR (259 aa). 3 N-linked (GlcNAc...) asparagine glycosylation sites follow: Asn-100, Asn-148, and Asn-248. Intrachain disulfides connect Cys-305–Cys-314, Cys-307–Cys-327, Cys-329–Cys-338, Cys-341–Cys-361, Cys-364–Cys-373, Cys-366–Cys-398, Cys-401–Cys-410, Cys-413–Cys-431, Cys-434–Cys-445, Cys-436–Cys-452, Cys-454–Cys-463, and Cys-466–Cys-476. Laminin EGF-like domains follow at residues 305 to 363, 364 to 433, and 434 to 479; these read CVCH…ECQS, CNCH…VCRP, and CDCE…CYPL. The N-linked (GlcNAc...) asparagine glycan is linked to Asn-383. Asn-457 carries an N-linked (GlcNAc...) asparagine glycan. Residue Asn-485 is glycosylated (N-linked (GlcNAc...) asparagine). Intrachain disulfides connect Cys-500–Cys-512, Cys-502–Cys-521, Cys-523–Cys-532, Cys-535–Cys-544, Cys-547–Cys-559, Cys-549–Cys-566, Cys-568–Cys-577, Cys-580–Cys-590, Cys-593–Cys-605, Cys-595–Cys-611, Cys-613–Cys-622, Cys-625–Cys-635, Cys-638–Cys-650, Cys-640–Cys-656, Cys-658–Cys-667, Cys-670–Cys-680, Cys-683–Cys-695, Cys-685–Cys-702, Cys-704–Cys-713, Cys-716–Cys-731, Cys-752–Cys-761, Cys-764–Cys-779, Cys-782–Cys-796, Cys-784–Cys-802, Cys-804–Cys-813, Cys-816–Cys-831, Cys-834–Cys-846, Cys-836–Cys-853, and Cys-855–Cys-864. Laminin EGF-like domains lie at 500 to 546, 547 to 592, 593 to 637, 638 to 682, 683 to 728, 729 to 781, and 782 to 833; these read CDCN…SCHP, CQCS…LCQL, CGCS…DCHA, CACD…SCIP, CHCS…YCEA, GSCH…GCTR, and CSCD…GCRS. Residues 834–855 enclose the Laminin EGF-like 11; truncated domain; the sequence is CRCDVGGALGQGCEPKTGACRC. The segment at 856–1442 is domain IV 1 (domain IV B); it reads RPNTQGPTCS…SLFYNNGALP (587 aa). N-linked (GlcNAc...) asparagine glycans are attached at residues Asn-905, Asn-926, and Asn-964. The tract at residues 1253–1284 is disordered; that stretch reads LTQSQELSPGAPPEGPQPRPPTAVDPNAEPTL. Residues 1262–1275 show a composition bias toward pro residues; that stretch reads GAPPEGPQPRPPTA. The N-linked (GlcNAc...) asparagine glycan is linked to Asn-1335. Intrachain disulfides connect Cys-1443–Cys-1455, Cys-1445–Cys-1462, Cys-1464–Cys-1473, Cys-1476–Cys-1486, Cys-1489–Cys-1496, Cys-1491–Cys-1503, Cys-1505–Cys-1514, Cys-1517–Cys-1530, Cys-1533–Cys-1548, Cys-1535–Cys-1555, Cys-1557–Cys-1566, Cys-1569–Cys-1579, Cys-1582–Cys-1594, Cys-1584–Cys-1601, Cys-1603–Cys-1612, and Cys-1615–Cys-1630. Laminin EGF-like domains follow at residues 1443-1488, 1489-1532, 1533-1581, and 1582-1632; these read CGCH…NCRP, CDCG…GCEE, CNCS…SCRP, and CDCH…GCTR. A glycan (N-linked (GlcNAc...) asparagine) is linked at Asn-1534. A Laminin EGF-like 16; first part domain is found at 1633 to 1642; the sequence is CFCFGATERC. One can recognise a Laminin IV type A domain in the interval 1646–1831; the sequence is NLARHEFVDM…RGPPASNVEL (186 aa). Short sequence motifs (cell attachment site) lie at residues 1723–1725 and 1839–1841; these read RGD. The 33-residue stretch at 1832-1864 folds into the Laminin EGF-like 16; second part domain; that stretch reads CMCPANYRGDSCQECAPGYYRDTKGLFLGRCVP. 24 disulfide bridges follow: Cys-1865–Cys-1874, Cys-1867–Cys-1881, Cys-1884–Cys-1893, Cys-1896–Cys-1912, Cys-1915–Cys-1930, Cys-1917–Cys-1939, Cys-1941–Cys-1950, Cys-1953–Cys-1968, Cys-1971–Cys-1986, Cys-1973–Cys-1993, Cys-1996–Cys-2005, Cys-2008–Cys-2022, Cys-2025–Cys-2035, Cys-2027–Cys-2042, Cys-2044–Cys-2053, Cys-2056–Cys-2069, Cys-2072–Cys-2083, Cys-2074–Cys-2090, Cys-2092–Cys-2101, Cys-2104–Cys-2116, Cys-2119–Cys-2126, Cys-2121–Cys-2133, Cys-2135–Cys-2144, and Cys-2147–Cys-2166. 6 consecutive Laminin EGF-like domains span residues 1865–1914, 1915–1970, 1971–2024, 2025–2071, 2072–2118, and 2119–2168; these read CQCH…PCVS, CPCP…SCQP, CDCS…NCTR, CDCS…GCRP, CACG…GCRR, and CQCP…HCEV. N-linked (GlcNAc...) asparagine glycosylation occurs at Asn-2021. The interval 2169 to 2735 is domain II and I; the sequence is CDHCVVLLLD…AQARSAASKV (567 aa). N-linked (GlcNAc...) asparagine glycosylation is found at Asn-2198, Asn-2211, Asn-2365, Asn-2395, Asn-2425, Asn-2503, and Asn-2570. Coiled coils occupy residues 2205–2257 and 2330–2464; these read ARLH…SQAT and TRDL…ASLD. 2 coiled-coil regions span residues 2604–2621 and 2639–2705; these read ARKN…AMLA and AEAL…LENR. An N-linked (GlcNAc...) asparagine glycan is attached at Asn-2709. Laminin G-like domains lie at 2736–2933, 2947–3119, 3128–3296, 3337–3511, and 3518–3689; these read KVSM…DKPC, GSYL…SFGC, TMTF…SVGC, AYQF…VTPC, and DGLF…MRGC. 2 disulfides stabilise this stretch: Cys-2903–Cys-2933 and Cys-3094–Cys-3119. Asn-3111, Asn-3213, Asn-3261, and Asn-3291 each carry an N-linked (GlcNAc...) asparagine glycan. 2 disulfide bridges follow: Cys-3265–Cys-3296 and Cys-3488–Cys-3511. 2 N-linked (GlcNAc...) asparagine glycosylation sites follow: Asn-3623 and Asn-3673. Cys-3661 and Cys-3689 are disulfide-bonded.

As to quaternary structure, laminin is a complex glycoprotein, consisting of three different polypeptide chains (alpha, beta, gamma), which are bound to each other by disulfide bonds into a cross-shaped molecule comprising one long and three short arms with globules at each end. Alpha-5 is a subunit of laminin-10 (laminin-511), laminin-11 (laminin-521) and laminin-15 (laminin-523). In adult, high levels in heart, lung, and kidney; lower in brain, muscle and testis; very low in liver, gut and skin.

The protein resides in the secreted. Its subcellular location is the extracellular space. It localises to the extracellular matrix. It is found in the basement membrane. Its function is as follows. Binding to cells via a high affinity receptor, laminin is thought to mediate the attachment, migration and organization of cells into tissues during embryonic development by interacting with other extracellular matrix components. Alpha-5 may be the major laminin alpha chain of adult epithelial and/or endothelial basal laminae. Plays a role in the regulation of skeletogenesis, through a mechanism that involves integrin-mediated signaling and PTK2B/PYK2. This is Laminin subunit alpha-5 (Lama5) from Mus musculus (Mouse).